Here is a 343-residue protein sequence, read N- to C-terminus: Ubiquitin carboxyl-terminal hydrolase isozyme L5 (343 aa).

One can recognise a UCH catalytic domain in the interval 6 to 218; it reads GWCTIESDPG…IRFNLMAVIK (213 aa). The active-site Nucleophile is the C83. Residue H157 is the Proton donor of the active site. Residues 242-266 are disordered; the sequence is LSELNSGSGGDNKEESGGATPTTKE. The 29-residue stretch at 306–334 folds into the ULD domain; the sequence is NFTPLILNLIKGLAEKDNLQPLIQKAKDQ.

It belongs to the peptidase C12 family. As to quaternary structure, component of the 19S (PA700) regulatory complex of the 26S proteasome.

Its subcellular location is the cytoplasm. The protein localises to the nucleus. The catalysed reaction is Thiol-dependent hydrolysis of ester, thioester, amide, peptide and isopeptide bonds formed by the C-terminal Gly of ubiquitin (a 76-residue protein attached to proteins as an intracellular targeting signal).. Protease that specifically cleaves 'Lys-48'-linked polyubiquitin chains. Deubiquitinating enzyme associated with the 19S regulatory subunit of the 26S proteasome. The chain is Ubiquitin carboxyl-terminal hydrolase isozyme L5 (uch2) from Dictyostelium discoideum (Social amoeba).